We begin with the raw amino-acid sequence, 203 residues long: MPPTHNEFMRTDVPMQPMYEQTAQRLLRQRIVFLGQQVDDEIANRIVGELLLLSAEDRERDITLYINSPGGSVTAGMAIYDVMQYIPNDVRTVGIGLAASMGQMLLCAGTRGKRYALPHTRIMMHQPSGGIGGTASDIRILADQLLYVKKMFLERISLHTGQPVEQIEKDADRDRWFTAQEALEYGFIDEVLTNTPDVTGGRS.

Serine 100 acts as the Nucleophile in catalysis. Residue histidine 125 is part of the active site.

Belongs to the peptidase S14 family. In terms of assembly, fourteen ClpP subunits assemble into 2 heptameric rings which stack back to back to give a disk-like structure with a central cavity, resembling the structure of eukaryotic proteasomes.

The protein resides in the cytoplasm. The enzyme catalyses Hydrolysis of proteins to small peptides in the presence of ATP and magnesium. alpha-casein is the usual test substrate. In the absence of ATP, only oligopeptides shorter than five residues are hydrolyzed (such as succinyl-Leu-Tyr-|-NHMec, and Leu-Tyr-Leu-|-Tyr-Trp, in which cleavage of the -Tyr-|-Leu- and -Tyr-|-Trp bonds also occurs).. Cleaves peptides in various proteins in a process that requires ATP hydrolysis. Has a chymotrypsin-like activity. Plays a major role in the degradation of misfolded proteins. The sequence is that of ATP-dependent Clp protease proteolytic subunit 2 from Thermobifida fusca (strain YX).